The sequence spans 86 residues: MeuNaTxbeta-1 (86 aa).

The signal sequence occupies residues Met-1–Thr-20. One can recognise an LCN-type CS-alpha/beta domain in the interval Asp-21–Asn-83. Intrachain disulfides connect Cys-32–Cys-82, Cys-36–Cys-57, Cys-43–Cys-64, and Cys-47–Cys-66.

In terms of tissue distribution, expressed by the venom gland.

It is found in the secreted. Its function is as follows. Inhibits sodium channels (Nav). Also moderately inhibits human calcium-activated potassium channel KCa1.1/KCNMA1/BK (41.9% decrease at 2 uM toxin concentration). Shows moderate antimicrobial activity against both Gram-positive and -negative bacteria. The chain is MeuNaTxbeta-1 from Mesobuthus eupeus (Lesser Asian scorpion).